The chain runs to 874 residues: Alanine--tRNA ligase (874 aa).

Positions 562, 566, 665, and 669 each coordinate Zn(2+).

It belongs to the class-II aminoacyl-tRNA synthetase family. Requires Zn(2+) as cofactor.

It localises to the cytoplasm. The enzyme catalyses tRNA(Ala) + L-alanine + ATP = L-alanyl-tRNA(Ala) + AMP + diphosphate. In terms of biological role, catalyzes the attachment of alanine to tRNA(Ala) in a two-step reaction: alanine is first activated by ATP to form Ala-AMP and then transferred to the acceptor end of tRNA(Ala). Also edits incorrectly charged Ser-tRNA(Ala) and Gly-tRNA(Ala) via its editing domain. The chain is Alanine--tRNA ligase from Pseudomonas putida (strain ATCC 47054 / DSM 6125 / CFBP 8728 / NCIMB 11950 / KT2440).